A 315-amino-acid polypeptide reads, in one-letter code: DNA-directed RNA polymerase subunit alpha (315 aa).

Residues 1-227 (MTQFQIECVE…NLFNPFKKIN (227 aa)) are alpha N-terminal domain (alpha-NTD). The alpha C-terminal domain (alpha-CTD) stretch occupies residues 239–315 (EDKISQIPIE…PKRKTNKKEN (77 aa)).

The protein belongs to the RNA polymerase alpha chain family. In terms of assembly, in plastids the minimal PEP RNA polymerase catalytic core is composed of four subunits: alpha, beta, beta', and beta''. When a (nuclear-encoded) sigma factor is associated with the core the holoenzyme is formed, which can initiate transcription.

It is found in the plastid. Its subcellular location is the cyanelle. It catalyses the reaction RNA(n) + a ribonucleoside 5'-triphosphate = RNA(n+1) + diphosphate. Functionally, DNA-dependent RNA polymerase catalyzes the transcription of DNA into RNA using the four ribonucleoside triphosphates as substrates. In Cyanophora paradoxa, this protein is DNA-directed RNA polymerase subunit alpha.